The following is a 152-amino-acid chain: Nucleoside diphosphate kinase (152 aa).

Residues Lys-12, Phe-60, Arg-88, Thr-94, Arg-105, and Asn-115 each coordinate ATP. His-118 (pros-phosphohistidine intermediate) is an active-site residue.

Belongs to the NDK family. As to quaternary structure, homotrimer. It depends on Mg(2+) as a cofactor.

The enzyme catalyses a 2'-deoxyribonucleoside 5'-diphosphate + ATP = a 2'-deoxyribonucleoside 5'-triphosphate + ADP. It catalyses the reaction a ribonucleoside 5'-diphosphate + ATP = a ribonucleoside 5'-triphosphate + ADP. Functionally, major role in the synthesis of nucleoside triphosphates other than ATP. The ATP gamma phosphate is transferred to the NDP beta phosphate via a ping-pong mechanism, using a phosphorylated active-site intermediate. This chain is Nucleoside diphosphate kinase (ndk-1), found in Neurospora crassa (strain ATCC 24698 / 74-OR23-1A / CBS 708.71 / DSM 1257 / FGSC 987).